Here is a 225-residue protein sequence, read N- to C-terminus: E3 ubiquitin-protein ligase ATL59 (225 aa).

Residues 22-42 form a helical membrane-spanning segment; sequence FTFIVCVPICVILIVLLVLYI. An RING-type; atypical zinc finger spans residues 97 to 139; the sequence is CSVCLGDYQAEEKLQQMPSCGHTFHMECIDLWLTSHTTCPLCR.

This sequence belongs to the RING-type zinc finger family. ATL subfamily.

Its subcellular location is the membrane. It carries out the reaction S-ubiquitinyl-[E2 ubiquitin-conjugating enzyme]-L-cysteine + [acceptor protein]-L-lysine = [E2 ubiquitin-conjugating enzyme]-L-cysteine + N(6)-ubiquitinyl-[acceptor protein]-L-lysine.. The protein operates within protein modification; protein ubiquitination. Its function is as follows. E3 ubiquitin-protein ligase able to catalyze polyubiquitination with ubiquitin-conjugating enzyme E2 UBC8, UBC10, UBC11, and UBC34 in vitro. This Arabidopsis thaliana (Mouse-ear cress) protein is E3 ubiquitin-protein ligase ATL59 (ATL59).